The primary structure comprises 101 residues: Small ribosomal subunit protein uS14 (101 aa).

Belongs to the universal ribosomal protein uS14 family. In terms of assembly, part of the 30S ribosomal subunit. Contacts proteins S3 and S10.

In terms of biological role, binds 16S rRNA, required for the assembly of 30S particles and may also be responsible for determining the conformation of the 16S rRNA at the A site. In Zymomonas mobilis subsp. mobilis (strain ATCC 31821 / ZM4 / CP4), this protein is Small ribosomal subunit protein uS14.